We begin with the raw amino-acid sequence, 833 residues long: Translation initiation factor IF-2 (833 aa).

A disordered region spans residues 1–247; it reads MTEDVKKADG…ALQQAFTKPA (247 aa). 2 stretches are compositionally biased toward basic and acidic residues: residues 53–99 and 110–152; these read QKAE…EAKK and VDVE…RYAE. Positions 153 to 166 are enriched in acidic residues; the sequence is LSEEDAENENSEDY. A compositionally biased stretch (basic residues) spans 187 to 203; that stretch reads KENRNRGGKNKVAKAKK. Residues 204-227 are compositionally biased toward basic and acidic residues; that stretch reads GGREDESSKTERESNRRNQKDGKM. Residues 333 to 502 enclose the tr-type G domain; it reads TRAPVVTIMG…LLQSEVLELT (170 aa). A G1 region spans residues 342–349; sequence GHVDHGKT. A GTP-binding site is contributed by 342–349; it reads GHVDHGKT. The tract at residues 367-371 is G2; sequence GITQH. The interval 388–391 is G3; it reads DTPG. GTP-binding positions include 388–392 and 442–445; these read DTPGH and NKID. The G4 stretch occupies residues 442–445; that stretch reads NKID. The segment at 478 to 480 is G5; that stretch reads SAK.

This sequence belongs to the TRAFAC class translation factor GTPase superfamily. Classic translation factor GTPase family. IF-2 subfamily.

It is found in the cytoplasm. In terms of biological role, one of the essential components for the initiation of protein synthesis. Protects formylmethionyl-tRNA from spontaneous hydrolysis and promotes its binding to the 30S ribosomal subunits. Also involved in the hydrolysis of GTP during the formation of the 70S ribosomal complex. This Pasteurella multocida (strain Pm70) protein is Translation initiation factor IF-2 (infB).